A 185-amino-acid chain; its full sequence is Ribosome-recycling factor (185 aa).

It belongs to the RRF family.

It is found in the cytoplasm. Functionally, responsible for the release of ribosomes from messenger RNA at the termination of protein biosynthesis. May increase the efficiency of translation by recycling ribosomes from one round of translation to another. The sequence is that of Ribosome-recycling factor from Corynebacterium urealyticum (strain ATCC 43042 / DSM 7109).